The primary structure comprises 778 residues: Ribosome biogenesis protein BOP1 homolog (778 aa).

Basic residues predominate over residues 1-10 (MAKKQDRKRK). The tract at residues 1–152 (MAKKQDRKRK…DSDTSDEEDI (152 aa)) is disordered. Composition is skewed to acidic residues over residues 44–53 (EDSTDDEGID), 60–72 (SSED…DEEG), and 84–105 (SSDE…DEEE). A compositionally biased stretch (polar residues) spans 114–124 (TTSSKAETNNE). Over residues 142 to 151 (EDSDTSDEED) the composition is skewed to acidic residues. WD repeat units follow at residues 438–479 (GHTD…RTIE), 481–519 (EDVV…KLLI), 564–606 (NHFK…SQIP), 609–647 (KSKG…LIKK), 650–689 (TNSK…KPYQ), 693–732 (LHRN…DLLQ), and 748–778 (RDDF…RLYT).

This sequence belongs to the WD repeat BOP1/ERB1 family.

Its subcellular location is the nucleus. It is found in the nucleolus. The protein localises to the nucleoplasm. In terms of biological role, required for maturation of ribosomal RNAs and formation of the large ribosomal subunit. This Drosophila willistoni (Fruit fly) protein is Ribosome biogenesis protein BOP1 homolog.